A 388-amino-acid chain; its full sequence is D-alanyl-D-alanine carboxypeptidase DacD (388 aa).

The N-terminal stretch at 1 to 21 is a signal peptide; it reads MKRRLIIAASLFVFNLSSGFA. The Acyl-ester intermediate role is filled by Ser63. Catalysis depends on Lys66, which acts as the Proton acceptor. Ser129 is a catalytic residue. Lys232 is a binding site for substrate.

Belongs to the peptidase S11 family.

It localises to the cell inner membrane. The catalysed reaction is Preferential cleavage: (Ac)2-L-Lys-D-Ala-|-D-Ala. Also transpeptidation of peptidyl-alanyl moieties that are N-acyl substituents of D-alanine.. The protein operates within cell wall biogenesis; peptidoglycan biosynthesis. Functionally, removes C-terminal D-alanyl residues from sugar-peptide cell wall precursors. The chain is D-alanyl-D-alanine carboxypeptidase DacD (dacD) from Escherichia coli (strain K12).